The following is a 167-amino-acid chain: Signal peptidase complex catalytic subunit SEC11 (167 aa).

Over 1 to 12 the chain is Cytoplasmic; it reads MNIRHQLVQFLN. Residues 13 to 30 form a helical; Signal-anchor for type II membrane protein membrane-spanning segment; sequence LALVLSSAFMAWKTLSVI. The Lumenal segment spans residues 31-167; sequence TNSHSPIVVV…MGISSLLSNE (137 aa). Residues Ser-44, His-83, and Asp-109 each act as charge relay system in the active site. The C-terminal short (CTS) helix stretch occupies residues 153-164; it reads TLLGLMGISSLL.

Belongs to the peptidase S26B family. As to quaternary structure, component of the signal peptidase complex (SPC) composed of a catalytic subunit SEC11 and three accessory subunits SPC1, SPC2 and SPC3. The complex induces a local thinning of the ER membrane which is used to measure the length of the signal peptide (SP) h-region of protein substrates. This ensures the selectivity of the complex towards h-regions shorter than 18-20 amino acids. SPC associates with the translocon complex.

The protein resides in the endoplasmic reticulum membrane. It catalyses the reaction Cleavage of hydrophobic, N-terminal signal or leader sequences from secreted and periplasmic proteins.. In terms of biological role, catalytic component of the signal peptidase complex (SPC) which catalyzes the cleavage of N-terminal signal sequences from nascent proteins as they are translocated into the lumen of the endoplasmic reticulum. Specifically cleaves N-terminal signal peptides that contain a hydrophobic alpha-helix (h-region) shorter than 18-20 amino acids. The protein is Signal peptidase complex catalytic subunit SEC11 (SEC11) of Debaryomyces hansenii (strain ATCC 36239 / CBS 767 / BCRC 21394 / JCM 1990 / NBRC 0083 / IGC 2968) (Yeast).